The primary structure comprises 293 residues: Ribosomal protein L11 methyltransferase (293 aa).

Threonine 144, glycine 165, aspartate 187, and asparagine 228 together coordinate S-adenosyl-L-methionine.

The protein belongs to the methyltransferase superfamily. PrmA family.

It is found in the cytoplasm. The catalysed reaction is L-lysyl-[protein] + 3 S-adenosyl-L-methionine = N(6),N(6),N(6)-trimethyl-L-lysyl-[protein] + 3 S-adenosyl-L-homocysteine + 3 H(+). Its function is as follows. Methylates ribosomal protein L11. In Methylococcus capsulatus (strain ATCC 33009 / NCIMB 11132 / Bath), this protein is Ribosomal protein L11 methyltransferase.